Consider the following 467-residue polypeptide: ATP-dependent protease ATPase subunit HslU (467 aa).

ATP-binding positions include Val22 and Gly64–Glu69. Positions Lys146–Ser185 are disordered. The span at Asn168 to Thr177 shows a compositional bias: acidic residues. Residues Asp280, Glu345, and Arg417 each coordinate ATP.

This sequence belongs to the ClpX chaperone family. HslU subfamily. A double ring-shaped homohexamer of HslV is capped on each side by a ring-shaped HslU homohexamer. The assembly of the HslU/HslV complex is dependent on binding of ATP.

It is found in the cytoplasm. ATPase subunit of a proteasome-like degradation complex; this subunit has chaperone activity. The binding of ATP and its subsequent hydrolysis by HslU are essential for unfolding of protein substrates subsequently hydrolyzed by HslV. HslU recognizes the N-terminal part of its protein substrates and unfolds these before they are guided to HslV for hydrolysis. This Staphylococcus haemolyticus (strain JCSC1435) protein is ATP-dependent protease ATPase subunit HslU.